The chain runs to 256 residues: NH(3)-dependent NAD(+) synthetase (256 aa).

ATP is bound at residue 29–36; sequence GISGGIDS. D35 provides a ligand contact to Mg(2+). R115 contacts deamido-NAD(+). T135 serves as a coordination point for ATP. E140 contacts Mg(2+). Positions 148 and 155 each coordinate deamido-NAD(+). 2 residues coordinate ATP: K164 and S186. 245-246 provides a ligand contact to deamido-NAD(+); it reads HK.

The protein belongs to the NAD synthetase family. Homodimer.

It carries out the reaction deamido-NAD(+) + NH4(+) + ATP = AMP + diphosphate + NAD(+) + H(+). It functions in the pathway cofactor biosynthesis; NAD(+) biosynthesis; NAD(+) from deamido-NAD(+) (ammonia route): step 1/1. Catalyzes the ATP-dependent amidation of deamido-NAD to form NAD. Uses ammonia as a nitrogen source. This Methanosarcina mazei (strain ATCC BAA-159 / DSM 3647 / Goe1 / Go1 / JCM 11833 / OCM 88) (Methanosarcina frisia) protein is NH(3)-dependent NAD(+) synthetase.